A 205-amino-acid chain; its full sequence is Golgi apparatus membrane protein TVP23 homolog B (205 aa).

Residue Met1 is modified to N-acetylmethionine. The interval 1–21 (MLQQDSNDDTEDVSLFDAEEE) is disordered. The next 4 helical transmembrane spans lie at 34 to 53 (PVAS…VYLL), 54 to 72 (CELL…ILLL), 126 to 146 (IFWL…FSAL), and 152 to 172 (KWLA…YGYI).

The protein belongs to the TVP23 family.

The protein localises to the membrane. This is Golgi apparatus membrane protein TVP23 homolog B (TVP23B) from Pongo abelii (Sumatran orangutan).